Reading from the N-terminus, the 423-residue chain is Transmembrane protease serine 11E (423 aa).

Over 1–18 the chain is Cytoplasmic; the sequence is MYRSCVVRARKRTCVEPW. A helical; Signal-anchor for type II membrane protein membrane pass occupies residues 19 to 39; it reads VIGIISFLSLIVLAVCIGLTV. Topologically, residues 40 to 423 are extracellular; the sequence is HYVRYNHRRT…RHWIASNTGI (384 aa). In terms of domain architecture, SEA spans 48–166; it reads RTYNYYSTLS…ESVKIKKINK (119 aa). N-linked (GlcNAc...) asparagine glycans are attached at residues N74, N165, N182, and N223. 4 disulfides stabilise this stretch: C176/C297, C217/C233, C342/C358, and C369/C398. The Peptidase S1 domain maps to 192-422; that stretch reads IVGGTPVEEE…FRHWIASNTG (231 aa). Active-site charge relay system residues include H232 and D277. S373 (charge relay system) is an active-site residue.

It belongs to the peptidase S1 family. In terms of assembly, forms a heterodimer with SERPINA5 and SERPINE1. In terms of processing, N-glycosylated. In terms of tissue distribution, expressed in epidermal, oral and male reproductive tissues.

The protein resides in the cell membrane. It localises to the secreted. Inhibited by SERPINA5. Functionally, serine protease which possesses both gelatinolytic and caseinolytic activities. Shows a preference for Arg in the P1 position. This Mus musculus (Mouse) protein is Transmembrane protease serine 11E (Tmprss11e).